Consider the following 359-residue polypeptide: 3-dehydroquinate synthase (359 aa).

Residues 105–109, 129–130, Lys142, Lys151, and 169–172 contribute to the NAD(+) site; these read GVVGD, TT, and TIKT. Zn(2+) contacts are provided by Glu184, His247, and His263.

The protein belongs to the sugar phosphate cyclases superfamily. Dehydroquinate synthase family. The cofactor is Co(2+). Zn(2+) serves as cofactor. NAD(+) is required as a cofactor.

It localises to the cytoplasm. The catalysed reaction is 7-phospho-2-dehydro-3-deoxy-D-arabino-heptonate = 3-dehydroquinate + phosphate. Its pathway is metabolic intermediate biosynthesis; chorismate biosynthesis; chorismate from D-erythrose 4-phosphate and phosphoenolpyruvate: step 2/7. Catalyzes the conversion of 3-deoxy-D-arabino-heptulosonate 7-phosphate (DAHP) to dehydroquinate (DHQ). This Ruminiclostridium cellulolyticum (strain ATCC 35319 / DSM 5812 / JCM 6584 / H10) (Clostridium cellulolyticum) protein is 3-dehydroquinate synthase.